The primary structure comprises 123 residues: Small ribosomal subunit protein uS13 (123 aa).

The interval 96 to 123 (GLPVRGQRTKTNARTRKGPKKTVAGKKK) is disordered.

This sequence belongs to the universal ribosomal protein uS13 family. As to quaternary structure, part of the 30S ribosomal subunit. Forms a loose heterodimer with protein S19. Forms two bridges to the 50S subunit in the 70S ribosome.

Its function is as follows. Located at the top of the head of the 30S subunit, it contacts several helices of the 16S rRNA. In the 70S ribosome it contacts the 23S rRNA (bridge B1a) and protein L5 of the 50S subunit (bridge B1b), connecting the 2 subunits; these bridges are implicated in subunit movement. Contacts the tRNAs in the A and P-sites. The polypeptide is Small ribosomal subunit protein uS13 (Nocardia farcinica (strain IFM 10152)).